Consider the following 809-residue polypeptide: Ecotropic viral integration site 5 protein (809 aa).

An interaction with alpha-tubulin, gamma-tubulin, BIRC5 and FBXO5 region spans residues 1–483 (MVTTKMTAAF…EAESQCALKE (483 aa)). Disordered stretches follow at residues 49–80 (VASPSASLHTTSSSTTLSTPTQSPSSPSKLSP) and 99–123 (DSKSLRSVNGSRRNSGSSLVSSSSA). A compositionally biased stretch (low complexity) spans 51–78 (SPSASLHTTSSSTTLSTPTQSPSSPSKL). Residues Ser-102 and Ser-113 each carry the phosphoserine modification. Residues 103–123 (LRSVNGSRRNSGSSLVSSSSA) show a composition bias toward low complexity. Residues 128–693 (SHLEEDSWIL…LNRSDSNQYI (566 aa)) form a dimerization region. Residues 163-348 (GIPHHFRAIV…RIFDIFMSEG (186 aa)) form the Rab-GAP TBC domain. The targeting to the centrosomes stretch occupies residues 377–809 (QHFQKVIPHQ…PQRESYSTTV (433 aa)). Residues 406–717 (KKMKKLEKEY…RCLKGQRDFS (312 aa)) are a coiled coil. The segment at 487 to 809 (KVLDIEKKNN…PQRESYSTTV (323 aa)) is interaction with AURKB and INCENP. Ser-497, Ser-689, Ser-776, and Ser-778 each carry phosphoserine. The disordered stretch occupies residues 760 to 809 (HRKSGPMSLNPALADGSESEAEDGMLGPQESDPEAPQKQPPQRESYSTTV). A compositionally biased stretch (polar residues) spans 799-809 (PPQRESYSTTV).

As to quaternary structure, dimeric and monomeric. Interacts with alpha- and gamma-tubulin. Interacts with FBXO5. Interacts with the chromosome passenger complex (CPC) which is at least composed of AURKB/aurora-B, BIRC5/survivin, CDCA8/borealin and INCENP. Post-translationally, probably phosphorylated by PLK1; may be required for degradation during mitosis. In terms of processing, ubiquitinated. Degradation during prophase is ubiquitin-dependent. Widely expressed.

Its subcellular location is the nucleus. The protein localises to the cytoplasm. It localises to the cytoskeleton. It is found in the microtubule organizing center. The protein resides in the centrosome. Its subcellular location is the spindle. Functions as a regulator of cell cycle progression by stabilizing the FBXO5 protein and promoting cyclin-A accumulation during interphase. May play a role in cytokinesis. This Mus musculus (Mouse) protein is Ecotropic viral integration site 5 protein (Evi5).